The primary structure comprises 139 residues: D-ribose pyranase (139 aa).

His-20 functions as the Proton donor in the catalytic mechanism. Residues Asp-28, His-106, and Tyr-128–Asn-130 contribute to the substrate site.

The protein belongs to the RbsD / FucU family. RbsD subfamily. In terms of assembly, homodecamer.

It localises to the cytoplasm. The catalysed reaction is beta-D-ribopyranose = beta-D-ribofuranose. It participates in carbohydrate metabolism; D-ribose degradation; D-ribose 5-phosphate from beta-D-ribopyranose: step 1/2. In terms of biological role, catalyzes the interconversion of beta-pyran and beta-furan forms of D-ribose. The polypeptide is D-ribose pyranase (Photobacterium profundum (strain SS9)).